The following is a 332-amino-acid chain: Protoheme IX farnesyltransferase (332 aa).

The next 7 helical transmembrane spans lie at 63 to 83 (LICT…LNCL), 109 to 129 (TVFL…ISGV), 132 to 152 (LAAG…TIIL), 160 to 180 (IVFG…AATG), 188 to 208 (WLFS…AILL), 245 to 265 (ILGV…LLPF), and 286 to 306 (AKGL…LLLI).

It belongs to the UbiA prenyltransferase family. Protoheme IX farnesyltransferase subfamily.

Its subcellular location is the cell inner membrane. It carries out the reaction heme b + (2E,6E)-farnesyl diphosphate + H2O = Fe(II)-heme o + diphosphate. It functions in the pathway porphyrin-containing compound metabolism; heme O biosynthesis; heme O from protoheme: step 1/1. Its function is as follows. Converts heme B (protoheme IX) to heme O by substitution of the vinyl group on carbon 2 of heme B porphyrin ring with a hydroxyethyl farnesyl side group. This Prochlorococcus marinus subsp. pastoris (strain CCMP1986 / NIES-2087 / MED4) protein is Protoheme IX farnesyltransferase.